Here is a 149-residue protein sequence, read N- to C-terminus: MRAVVQRVSSSKVTVDENTIGQINKGLLVLLGVTHDDKSSDVDYMIDKILNLRIFEDENDKMNLSLMDIGGELLVVSQFTLYGDCRKGRRPGFSNAARPELANNLYEEFVKKAKDKGVTVGTGQFAAHMMVELTNDGPVTILLDSSKSF.

The Gly-cisPro motif, important for rejection of L-amino acids motif lies at 137 to 138 (GP).

Belongs to the DTD family. As to quaternary structure, homodimer.

The protein localises to the cytoplasm. The catalysed reaction is glycyl-tRNA(Ala) + H2O = tRNA(Ala) + glycine + H(+). It carries out the reaction a D-aminoacyl-tRNA + H2O = a tRNA + a D-alpha-amino acid + H(+). An aminoacyl-tRNA editing enzyme that deacylates mischarged D-aminoacyl-tRNAs. Also deacylates mischarged glycyl-tRNA(Ala), protecting cells against glycine mischarging by AlaRS. Acts via tRNA-based rather than protein-based catalysis; rejects L-amino acids rather than detecting D-amino acids in the active site. By recycling D-aminoacyl-tRNA to D-amino acids and free tRNA molecules, this enzyme counteracts the toxicity associated with the formation of D-aminoacyl-tRNA entities in vivo and helps enforce protein L-homochirality. This is D-aminoacyl-tRNA deacylase from Clostridioides difficile (strain 630) (Peptoclostridium difficile).